Reading from the N-terminus, the 225-residue chain is ATP synthase F(0) complex subunit a (225 aa).

Transmembrane regions (helical) follow at residues 10-30 (PSLLGISLLMPALLMTTILLL), 69-89 (LILISLLILLSLTNLLGLLPY), 96-116 (QLSMNMAIALPLWLVTVLIGL), 135-155 (LLIPILILIETISLLIRPIAL), 168-188 (LLIQLISIATLNLWFMMPPLS), and 194-214 (VLILLLLLEFAVAMIQAYVFV).

This sequence belongs to the ATPase A chain family. Component of the ATP synthase complex composed at least of ATP5F1A/subunit alpha, ATP5F1B/subunit beta, ATP5MC1/subunit c (homooctomer), MT-ATP6/subunit a, MT-ATP8/subunit 8, ATP5ME/subunit e, ATP5MF/subunit f, ATP5MG/subunit g, ATP5MK/subunit k, ATP5MJ/subunit j, ATP5F1C/subunit gamma, ATP5F1D/subunit delta, ATP5F1E/subunit epsilon, ATP5PF/subunit F6, ATP5PB/subunit b, ATP5PD/subunit d, ATP5PO/subunit OSCP. ATP synthase complex consists of a soluble F(1) head domain (subunits alpha(3) and beta(3)) - the catalytic core - and a membrane F(0) domain - the membrane proton channel (subunits c, a, 8, e, f, g, k and j). These two domains are linked by a central stalk (subunits gamma, delta, and epsilon) rotating inside the F1 region and a stationary peripheral stalk (subunits F6, b, d, and OSCP). Interacts with DNAJC30; interaction is direct.

The protein resides in the mitochondrion inner membrane. The enzyme catalyses H(+)(in) = H(+)(out). Subunit a, of the mitochondrial membrane ATP synthase complex (F(1)F(0) ATP synthase or Complex V) that produces ATP from ADP in the presence of a proton gradient across the membrane which is generated by electron transport complexes of the respiratory chain. ATP synthase complex consist of a soluble F(1) head domain - the catalytic core - and a membrane F(1) domain - the membrane proton channel. These two domains are linked by a central stalk rotating inside the F(1) region and a stationary peripheral stalk. During catalysis, ATP synthesis in the catalytic domain of F(1) is coupled via a rotary mechanism of the central stalk subunits to proton translocation. With the subunit c (ATP5MC1), forms the proton-conducting channel in the F(0) domain, that contains two crucial half-channels (inlet and outlet) that facilitate proton movement from the mitochondrial intermembrane space (IMS) into the matrix. Protons are taken up via the inlet half-channel and released through the outlet half-channel, following a Grotthuss mechanism. The polypeptide is ATP synthase F(0) complex subunit a (Alligator mississippiensis (American alligator)).